The sequence spans 60 residues: Large ribosomal subunit protein uL30 (60 aa).

Belongs to the universal ribosomal protein uL30 family. As to quaternary structure, part of the 50S ribosomal subunit.

The chain is Large ribosomal subunit protein uL30 from Acidothermus cellulolyticus (strain ATCC 43068 / DSM 8971 / 11B).